Consider the following 561-residue polypeptide: Solute carrier family 41 member 2 (561 aa).

Topologically, residues 1 to 150 (MTANTGEPYK…KESSIAMALQ (150 aa)) are extracellular. The chain crosses the membrane as a helical span at residues 151–171 (ILVPFLLAGFGTVSAGMVLDI). Residues 172-183 (VQHWDVFKNLTE) are Cytoplasmic-facing. The chain crosses the membrane as a helical span at residues 184–204 (VFILVPALLGLKGNLEMTLAS). Residues 205–233 (RLSTAVNVGKMDSPIEKWNLIIGNLALKQ) lie on the Extracellular side of the membrane. Residues 234–254 (VQATVVGFLAAVFAVILGWIP) traverse the membrane as a helical segment. Over 255 to 270 (DGKYQLDHAILLCSSS) the chain is Cytoplasmic. A helical transmembrane segment spans residues 271–291 (VATAFIASLLQGIIMVGVIVG). Over 292 to 301 (SKKTGINPDN) the chain is Extracellular. Residues 302-322 (VATPIAASFGDLITLAILAWI) form a helical membrane-spanning segment. At 323–333 (SQGLYNCLGSY) the chain is on the cytoplasmic side. Residues 334-354 (AFVSPLVGVFFLAMTPIWIVI) form a helical membrane-spanning segment. The Extracellular segment spans residues 355 to 364 (ASKHPATRTV). Residues 365 to 385 (LHSGWEPVITAMLISSIGGLI) traverse the membrane as a helical segment. The Cytoplasmic segment spans residues 386–394 (LDTTVSDPN). A helical transmembrane segment spans residues 395–415 (LVGIVVYTPVINGIGGNLVAI). At 416-457 (QASRISTYLHLYSIPGELPEDAKGCYHPCRTFCGTGVNNKSA) the chain is on the extracellular side. Residues 458–478 (QVLLSLVIPGHLIFLYTIYLM) traverse the membrane as a helical segment. At 479–487 (KSGHTSLTP) the chain is on the cytoplasmic side. Residues 488 to 508 (IFVAVYLLAALLQVFALLWIA) traverse the membrane as a helical segment. Residues 509-531 (DWMVHHIWRKGKDPDSFSIPYLT) lie on the Extracellular side of the membrane. The helical transmembrane segment at 532–552 (ALGDLLGTALLAISFHILWII) threads the bilayer. Topologically, residues 553 to 561 (GDRDGDVGD) are cytoplasmic.

It belongs to the SLC41A transporter family.

It is found in the cell membrane. The catalysed reaction is Mg(2+)(in) = Mg(2+)(out). It catalyses the reaction Mn(2+)(in) = Mn(2+)(out). It carries out the reaction Co(2+)(in) = Co(2+)(out). The enzyme catalyses Ni(2+)(in) = Ni(2+)(out). The catalysed reaction is Fe(2+)(in) = Fe(2+)(out). Acts as a plasma-membrane magnesium transporter. Can also mediate the transport of other divalent metal cations in an order of Ba(2+) &gt; Ni(2+) &gt; Co(2+) &gt; Fe(2+) &gt; Mn(2+). The chain is Solute carrier family 41 member 2 (slc41a2) from Xenopus laevis (African clawed frog).